Consider the following 706-residue polypeptide: Semenogelin-2 (706 aa).

Residues 1–23 (MKSIILFVLSLLLILEKQAAVMG) form the signal peptide. Disordered stretches follow at residues 25–62 (KGGS…SKGS), 131–156 (KGGQ…KGIF), and 276–678 (NLNQ…SGAH). Residues 50 to 59 (GQKDKQHTES) are compositionally biased toward basic and acidic residues. The segment covering 137-151 (HGTQNPSQDQGNSPS) has biased composition (polar residues). Residues 297–308 (TEERQPNHEENS) show a composition bias toward basic and acidic residues. The span at 329 to 339 (KSQNQVTIPSQ) shows a compositional bias: polar residues. Residues 340 to 349 (DQEHGHKENK) show a composition bias toward basic and acidic residues. Residues 389 to 399 (KSQNQVTIPSQ) show a composition bias toward polar residues. A compositionally biased stretch (basic and acidic residues) spans 400-409 (DQEHGHKENK). Over residues 449-459 (KSQNQVTIPSQ) the composition is skewed to polar residues. Positions 460–469 (DQEHGHKENK) are enriched in basic and acidic residues. Polar residues predominate over residues 509-519 (KSQNQVAIPSQ). Residues 520-529 (DQEHGHKENK) are compositionally biased toward basic and acidic residues. Positions 569–579 (KSQNQVTIPSQ) are enriched in polar residues. The span at 580–589 (DQEHGHKENK) shows a compositional bias: basic and acidic residues. 2 stretches are compositionally biased toward polar residues: residues 611 to 622 (KDVSQSSLSFQT) and 630 to 653 (SQIQ…NSGK). Residues 654–670 (SADREQDLLSHEQEGRY) show a composition bias toward basic and acidic residues.

This sequence belongs to the semenogelin family. Interacts with SERPINA5.

It is found in the secreted. Its function is as follows. Participates in the formation of a gel matrix (sperm coagulum) entrapping the accessory gland secretions and ejaculated spermatozoa. This is Semenogelin-2 (SEMG2) from Macaca mulatta (Rhesus macaque).